We begin with the raw amino-acid sequence, 712 residues long: Methionine--tRNA ligase (712 aa).

Positions 20–30 (PYANGKAHIGH) match the 'HIGH' region motif. 4 residues coordinate Zn(2+): C151, C154, C163, and C167. The 'KMSKS' region signature appears at 334-338 (KFSKT). K337 is a binding site for ATP. The disordered stretch occupies residues 559 to 585 (ANAKKSAAKGGEKEPSKSEGMGPSEEA). In terms of domain architecture, tRNA-binding spans 610–712 (DFAKLDIRVG…KEIKPGSRIR (103 aa)).

The protein belongs to the class-I aminoacyl-tRNA synthetase family. MetG type 1 subfamily. As to quaternary structure, homodimer. Zn(2+) serves as cofactor.

It localises to the cytoplasm. It carries out the reaction tRNA(Met) + L-methionine + ATP = L-methionyl-tRNA(Met) + AMP + diphosphate. In terms of biological role, is required not only for elongation of protein synthesis but also for the initiation of all mRNA translation through initiator tRNA(fMet) aminoacylation. The chain is Methionine--tRNA ligase from Methanosarcina acetivorans (strain ATCC 35395 / DSM 2834 / JCM 12185 / C2A).